A 131-amino-acid polypeptide reads, in one-letter code: MSGRGKQGGKARAKSKSRSSRAGLQFPVGRIHRLLRKGNYAERIGAGAPVYLAAVLEYLTAEILELAGNASRDNKKTRIIPRHLQLAIRNDEELNKLLGGVTIAQGGVLPNIQAVLLPKKTESHHHKAQSK.

Residues 1–23 are disordered; that stretch reads MSGRGKQGGKARAKSKSRSSRAG. Ser-2 carries the N-acetylserine modification. At Ser-2 the chain carries Phosphoserine; by RPS6KA5. Residue Arg-4 is modified to Citrulline; alternate. Arg-4 carries the symmetric dimethylarginine; by PRMT5; alternate modification. At Lys-6 the chain carries N6-(2-hydroxyisobutyryl)lysine. Residues 7-19 are compositionally biased toward basic residues; it reads QGGKARAKSKSRS. An N6-(2-hydroxyisobutyryl)lysine; alternate modification is found at Lys-10. The residue at position 10 (Lys-10) is an N6-(beta-hydroxybutyryl)lysine; alternate. Residue Lys-10 is modified to N6-lactoyllysine; alternate. Lys-10 carries the N6-succinyllysine; alternate modification. Lys-14 is modified (N6-(beta-hydroxybutyryl)lysine). Residues Lys-14 and Lys-16 each participate in a glycyl lysine isopeptide (Lys-Gly) (interchain with G-Cter in ubiquitin) cross-link. An N6-(2-hydroxyisobutyryl)lysine; alternate modification is found at Lys-37. An N6-(beta-hydroxybutyryl)lysine; alternate modification is found at Lys-37. Lys-37 is modified (N6-crotonyllysine; alternate). N6-(2-hydroxyisobutyryl)lysine occurs at positions 75 and 76. Lys-96 is subject to N6-(2-hydroxyisobutyryl)lysine; alternate. The residue at position 96 (Lys-96) is an N6-(beta-hydroxybutyryl)lysine; alternate. The residue at position 96 (Lys-96) is an N6-succinyllysine; alternate. Lys-96 bears the N6-glutaryllysine; alternate mark. Gln-105 is modified (N5-methylglutamine). At Lys-119 the chain carries N6-(2-hydroxyisobutyryl)lysine; alternate. Lys-119 carries the N6-(beta-hydroxybutyryl)lysine; alternate modification. N6-crotonyllysine; alternate occurs at positions 119 and 120. Residues Lys-119 and Lys-120 each carry the N6-glutaryllysine; alternate modification. Lys-120 participates in a covalent cross-link: Glycyl lysine isopeptide (Lys-Gly) (interchain with G-Cter in ubiquitin); alternate. Phosphothreonine; by DCAF1 is present on Thr-121. Position 127 is an N6-crotonyllysine (Lys-127).

This sequence belongs to the histone H2A family. In terms of assembly, the nucleosome is a histone octamer containing two molecules each of H2A, H2B, H3 and H4 assembled in one H3-H4 heterotetramer and two H2A-H2B heterodimers. The octamer wraps approximately 147 bp of DNA. Post-translationally, deiminated on Arg-4 in granulocytes upon calcium entry. Monoubiquitination of Lys-120 (H2AK119Ub) by RING1, TRIM37 and RNF2/RING2 complex gives a specific tag for epigenetic transcriptional repression and participates in X chromosome inactivation of female mammals. It is involved in the initiation of both imprinted and random X inactivation. Ubiquitinated H2A is enriched in inactive X chromosome chromatin. Ubiquitination of H2A functions downstream of methylation of 'Lys-27' of histone H3 (H3K27me). H2AK119Ub by RNF2/RING2 can also be induced by ultraviolet and may be involved in DNA repair. Monoubiquitination of Lys-120 (H2AK119Ub) by TRIM37 may promote transformation of cells in a number of breast cancers. Following DNA double-strand breaks (DSBs), it is ubiquitinated through 'Lys-63' linkage of ubiquitin moieties by the E2 ligase UBE2N and the E3 ligases RNF8 and RNF168, leading to the recruitment of repair proteins to sites of DNA damage. Ubiquitination at Lys-14 and Lys-16 (H2AK13Ub and H2AK15Ub, respectively) in response to DNA damage is initiated by RNF168 that mediates monoubiquitination at these 2 sites, and 'Lys-63'-linked ubiquitin are then conjugated to monoubiquitin; RNF8 is able to extend 'Lys-63'-linked ubiquitin chains in vitro. Deubiquitinated by USP51 at Lys-14 and Lys-16 (H2AK13Ub and H2AK15Ub, respectively) after damaged DNA is repaired. H2AK119Ub and ionizing radiation-induced 'Lys-63'-linked ubiquitination (H2AK13Ub and H2AK15Ub) are distinct events. In terms of processing, phosphorylation on Ser-2 (H2AS1ph) is enhanced during mitosis. Phosphorylation on Ser-2 by RPS6KA5/MSK1 directly represses transcription. Acetylation of H3 inhibits Ser-2 phosphorylation by RPS6KA5/MSK1. Phosphorylation at Thr-121 (H2AT120ph) by DCAF1 is present in the regulatory region of many tumor suppresor genes and down-regulates their transcription. Post-translationally, glutamine methylation at Gln-105 (H2AQ104me) by FBL is specifically dedicated to polymerase I. It is present at 35S ribosomal DNA locus and impairs binding of the FACT complex. Symmetric dimethylation on Arg-4 by the PRDM1/PRMT5 complex may play a crucial role in the germ-cell lineage. In terms of processing, crotonylation (Kcr) is specifically present in male germ cells and marks testis-specific genes in post-meiotic cells, including X-linked genes that escape sex chromosome inactivation in haploid cells. Crotonylation marks active promoters and enhancers and confers resistance to transcriptional repressors. It is also associated with post-meiotically activated genes on autosomes. Post-translationally, lactylated in macrophages by EP300/P300 by using lactoyl-CoA directly derived from endogenous or exogenous lactate, leading to stimulates gene transcription.

The protein resides in the nucleus. Its subcellular location is the chromosome. Functionally, core component of nucleosome. Nucleosomes wrap and compact DNA into chromatin, limiting DNA accessibility to the cellular machineries which require DNA as a template. Histones thereby play a central role in transcription regulation, DNA repair, DNA replication and chromosomal stability. DNA accessibility is regulated via a complex set of post-translational modifications of histones, also called histone code, and nucleosome remodeling. The sequence is that of Histone H2A type 1-A from Homo sapiens (Human).